A 121-amino-acid polypeptide reads, in one-letter code: Small ribosomal subunit protein uS13 (121 aa).

The disordered stretch occupies residues 94-121; the sequence is GLPVRGQNTKNNARTRKGKAVAIAGKKK. Positions 106–121 are enriched in basic residues; it reads ARTRKGKAVAIAGKKK.

The protein belongs to the universal ribosomal protein uS13 family. As to quaternary structure, part of the 30S ribosomal subunit. Forms a loose heterodimer with protein S19. Forms two bridges to the 50S subunit in the 70S ribosome.

In terms of biological role, located at the top of the head of the 30S subunit, it contacts several helices of the 16S rRNA. In the 70S ribosome it contacts the 23S rRNA (bridge B1a) and protein L5 of the 50S subunit (bridge B1b), connecting the 2 subunits; these bridges are implicated in subunit movement. Contacts the tRNAs in the A and P-sites. This is Small ribosomal subunit protein uS13 from Streptococcus sanguinis (strain SK36).